Consider the following 335-residue polypeptide: Tryptophan--tRNA ligase (335 aa).

ATP is bound by residues 13–15 (QPS) and 21–22 (GN). The 'HIGH' region motif lies at 14-22 (PSGELTIGN). L-tryptophan is bound at residue aspartate 138. ATP is bound by residues 150–152 (GKD), isoleucine 189, and 198–202 (KMSKS). A 'KMSKS' region motif is present at residues 198–202 (KMSKS).

It belongs to the class-I aminoacyl-tRNA synthetase family. Homodimer.

The protein localises to the cytoplasm. It carries out the reaction tRNA(Trp) + L-tryptophan + ATP = L-tryptophyl-tRNA(Trp) + AMP + diphosphate + H(+). Functionally, catalyzes the attachment of tryptophan to tRNA(Trp). This is Tryptophan--tRNA ligase from Clostridium acetobutylicum (strain ATCC 824 / DSM 792 / JCM 1419 / IAM 19013 / LMG 5710 / NBRC 13948 / NRRL B-527 / VKM B-1787 / 2291 / W).